Here is a 268-residue protein sequence, read N- to C-terminus: Exopolysaccharide production negative regulator (268 aa).

Positions 1-22 are cleaved as a signal peptide; that stretch reads MRAGELKSLRVAVLGMSLAVGA.

Functionally, negatively modulates exopolysaccharide (EPS) biosynthesis. This chain is Exopolysaccharide production negative regulator (exoR), found in Rhizobium meliloti (strain 1021) (Ensifer meliloti).